The sequence spans 526 residues: Peptide chain release factor 3 (526 aa).

The tr-type G domain maps to 9–277; the sequence is DKRRTFAIIS…GIVEWAPVPQ (269 aa). GTP is bound by residues 18–25, 86–90, and 140–143; these read SHPDAGKT, DTPGH, and NKLD.

Belongs to the TRAFAC class translation factor GTPase superfamily. Classic translation factor GTPase family. PrfC subfamily.

It localises to the cytoplasm. Its function is as follows. Increases the formation of ribosomal termination complexes and stimulates activities of RF-1 and RF-2. It binds guanine nucleotides and has strong preference for UGA stop codons. It may interact directly with the ribosome. The stimulation of RF-1 and RF-2 is significantly reduced by GTP and GDP, but not by GMP. The chain is Peptide chain release factor 3 from Shewanella pealeana (strain ATCC 700345 / ANG-SQ1).